A 729-amino-acid polypeptide reads, in one-letter code: Fatty acid oxidation complex subunit alpha (729 aa).

The segment at 1–189 is enoyl-CoA hydratase/isomerase; the sequence is MLYQGESLYL…KVGLVQAVVA (189 aa). D296 contacts substrate. A 3-hydroxyacyl-CoA dehydrogenase region spans residues 311-729; the sequence is PVPQQAAVLG…HADVSHGQPA (419 aa). NAD(+)-binding positions include M324, D343, 400–402, K407, and S429; that span reads VVE. Residue H450 is the For 3-hydroxyacyl-CoA dehydrogenase activity of the active site. An NAD(+)-binding site is contributed by N453. Residues N500 and Y660 each contribute to the substrate site.

It in the N-terminal section; belongs to the enoyl-CoA hydratase/isomerase family. In the C-terminal section; belongs to the 3-hydroxyacyl-CoA dehydrogenase family. Heterotetramer of two alpha chains (FadB) and two beta chains (FadA).

It carries out the reaction a (3S)-3-hydroxyacyl-CoA + NAD(+) = a 3-oxoacyl-CoA + NADH + H(+). The enzyme catalyses a (3S)-3-hydroxyacyl-CoA = a (2E)-enoyl-CoA + H2O. The catalysed reaction is a 4-saturated-(3S)-3-hydroxyacyl-CoA = a (3E)-enoyl-CoA + H2O. It catalyses the reaction (3S)-3-hydroxybutanoyl-CoA = (3R)-3-hydroxybutanoyl-CoA. It carries out the reaction a (3Z)-enoyl-CoA = a 4-saturated (2E)-enoyl-CoA. The enzyme catalyses a (3E)-enoyl-CoA = a 4-saturated (2E)-enoyl-CoA. Its pathway is lipid metabolism; fatty acid beta-oxidation. Its function is as follows. Involved in the aerobic and anaerobic degradation of long-chain fatty acids via beta-oxidation cycle. Catalyzes the formation of 3-oxoacyl-CoA from enoyl-CoA via L-3-hydroxyacyl-CoA. It can also use D-3-hydroxyacyl-CoA and cis-3-enoyl-CoA as substrate. The chain is Fatty acid oxidation complex subunit alpha from Pectobacterium atrosepticum (strain SCRI 1043 / ATCC BAA-672) (Erwinia carotovora subsp. atroseptica).